We begin with the raw amino-acid sequence, 150 residues long: Globin-1 (150 aa).

A Globin domain is found at 11–150 (PLSDAEKNKI…MICILLSSAY (140 aa)). Positions 74 and 106 each coordinate heme b.

Belongs to the globin family. In terms of assembly, monomer.

This is Globin-1 from Mordacia mordax (Southern hemisphere lamprey).